The primary structure comprises 335 residues: Tetraacyldisaccharide 4'-kinase (335 aa).

58 to 65 (TAGGSGKT) lines the ATP pocket.

Belongs to the LpxK family.

The catalysed reaction is a lipid A disaccharide + ATP = a lipid IVA + ADP + H(+). The protein operates within glycolipid biosynthesis; lipid IV(A) biosynthesis; lipid IV(A) from (3R)-3-hydroxytetradecanoyl-[acyl-carrier-protein] and UDP-N-acetyl-alpha-D-glucosamine: step 6/6. Transfers the gamma-phosphate of ATP to the 4'-position of a tetraacyldisaccharide 1-phosphate intermediate (termed DS-1-P) to form tetraacyldisaccharide 1,4'-bis-phosphate (lipid IVA). This Shewanella frigidimarina (strain NCIMB 400) protein is Tetraacyldisaccharide 4'-kinase.